The sequence spans 249 residues: uncharacterized protein (249 aa).

Composition is skewed to polar residues over residues 66-79 (NASLESGQSSTISP) and 92-119 (ASGSVSANKTFQSTESSALHQPKSSSSE). The disordered stretch occupies residues 66-142 (NASLESGQSS…GPTSPRVTPG (77 aa)).

Its subcellular location is the plastid. The protein localises to the chloroplast. This is an uncharacterized protein from Chlorella vulgaris (Green alga).